A 269-amino-acid chain; its full sequence is Transcription factor MYB7 (269 aa).

HTH myb-type domains follow at residues 9–61 (KEHM…INYL) and 62–116 (RPDL…KRKL). DNA-binding regions (H-T-H motif) lie at residues 37-61 (WRSL…INYL) and 89-112 (WSLI…NTHI).

In terms of assembly, interacts with SAD2. In terms of tissue distribution, expressed in anthers. Expressed in pollen grains and mature seeds. Expressed in roots and vasculature of leaves.

It localises to the nucleus. Functionally, transcription factor involved in the negative regulation of flavonol biosynthesis. Represses the early phenylpropanoid genes, phenylalanine ammonia-lyase (PAL), cinnamate 4-hydroxylase (C4H) and 4-coumarate-CoA ligase (4CL), as well as the flavonoid-specific genes, flavonoid 3'-hydroxylase (F3'H) and dihydroflavonol 4-reductase (DFR). Plays a role in seed germination inhibition. Negatively regulates the expression of the abscisic acid (ABA) signaling transcription factor ABI5 in seeds. This is Transcription factor MYB7 from Arabidopsis thaliana (Mouse-ear cress).